A 529-amino-acid polypeptide reads, in one-letter code: Probable feruloyl esterase B-1 (529 aa).

A signal peptide spans methionine 1–alanine 19. 2 cysteine pairs are disulfide-bonded: cysteine 27–cysteine 75 and cysteine 63–cysteine 114. 5 N-linked (GlcNAc...) asparagine glycosylation sites follow: asparagine 53, asparagine 64, asparagine 85, asparagine 98, and asparagine 138. 4 disulfide bridges follow: cysteine 187-cysteine 445, cysteine 256-cysteine 273, cysteine 282-cysteine 295, and cysteine 505-cysteine 527. Serine 188 serves as the catalytic Acyl-ester intermediate. N-linked (GlcNAc...) asparagine glycosylation occurs at asparagine 233. The Ca(2+) site is built by aspartate 257, aspartate 260, alanine 262, aspartate 264, and leucine 266. N-linked (GlcNAc...) asparagine glycosylation is found at asparagine 286, asparagine 290, and asparagine 354. Residues aspartate 404 and histidine 444 each act as charge relay system in the active site.

It belongs to the tannase family.

It localises to the secreted. The catalysed reaction is feruloyl-polysaccharide + H2O = ferulate + polysaccharide.. In terms of biological role, involved in degradation of plant cell walls. Hydrolyzes the feruloyl-arabinose ester bond in arabinoxylans as well as the feruloyl-galactose and feruloyl-arabinose ester bonds in pectin. The polypeptide is Probable feruloyl esterase B-1 (faeB-1) (Aspergillus terreus (strain NIH 2624 / FGSC A1156)).